The following is an 89-amino-acid chain: MSRSLKKGPYINVKLEKRIFAMNESGKKVVVKTWARASMISPDFVGHTVAVHNGNKFIPVYVTENMVGHKLGEFAPTRTFRGHAGNKKR.

Belongs to the universal ribosomal protein uS19 family.

Protein S19 forms a complex with S13 that binds strongly to the 16S ribosomal RNA. This Bacteroides thetaiotaomicron (strain ATCC 29148 / DSM 2079 / JCM 5827 / CCUG 10774 / NCTC 10582 / VPI-5482 / E50) protein is Small ribosomal subunit protein uS19.